A 513-amino-acid polypeptide reads, in one-letter code: Probable cytosol aminopeptidase (513 aa).

Mn(2+) contacts are provided by Lys-277 and Asp-282. Lys-289 is an active-site residue. 3 residues coordinate Mn(2+): Asp-300, Asp-359, and Glu-361. The active site involves Arg-363.

Belongs to the peptidase M17 family. Mn(2+) is required as a cofactor.

It localises to the cytoplasm. The enzyme catalyses Release of an N-terminal amino acid, Xaa-|-Yaa-, in which Xaa is preferably Leu, but may be other amino acids including Pro although not Arg or Lys, and Yaa may be Pro. Amino acid amides and methyl esters are also readily hydrolyzed, but rates on arylamides are exceedingly low.. The catalysed reaction is Release of an N-terminal amino acid, preferentially leucine, but not glutamic or aspartic acids.. Its function is as follows. Presumably involved in the processing and regular turnover of intracellular proteins. Catalyzes the removal of unsubstituted N-terminal amino acids from various peptides. This Mycobacterium sp. (strain JLS) protein is Probable cytosol aminopeptidase.